The primary structure comprises 30 residues: U5-ctenitoxin-Pk1b (30 aa).

2 disulfide bridges follow: Cys6/Cys23 and Cys13/Cys29.

This sequence belongs to the neurotoxin 04 (omega-agtx) family. 02 (Tx1) subfamily. In terms of tissue distribution, expressed by the venom gland.

It localises to the secreted. In terms of biological role, lethal neurotoxin. Causes spastic paralysis and death in mice in 4-6 minutes after intracerebroventricular injection at dose levels of 1.5 ug per mouse. This Phoneutria keyserlingi (Brazilian wandering spider) protein is U5-ctenitoxin-Pk1b.